The sequence spans 599 residues: uncharacterized protein (599 aa).

49–56 (GPPGSGKT) serves as a coordination point for ATP. The 184-residue stretch at 416–599 (AEVRKELEYK…TKIFEEKFSV (184 aa)) folds into the Macro domain.

In the N-terminal section; belongs to the AAA ATPase family. RarA/MGS1/WRNIP1 subfamily.

This is an uncharacterized protein from Thermotoga maritima (strain ATCC 43589 / DSM 3109 / JCM 10099 / NBRC 100826 / MSB8).